The sequence spans 332 residues: T-cell leukemia homeobox protein 1 (332 aa).

The segment at residues 203–262 (KKKPRTSFTRLQICELEKRFHRQKYLASAERAALAKALKMTDAQVKTWFQNRRTKWRRQT) is a DNA-binding region (homeobox). At K238 the chain carries N6-acetyllysine.

In terms of tissue distribution, expressed in various embryonic tissues, including branchial arches, some component of the nervous system and spleen.

Its subcellular location is the nucleus. Its function is as follows. Controls the genesis of the spleen. Binds to the DNA sequence 5'-GGCGGTAAGTGG-3'. The protein is T-cell leukemia homeobox protein 1 (Tlx1) of Mus musculus (Mouse).